The primary structure comprises 359 residues: 4-hydroxy-3-methylbut-2-en-1-yl diphosphate synthase (flavodoxin) (359 aa).

Positions 263, 266, 298, and 305 each coordinate [4Fe-4S] cluster.

It belongs to the IspG family. It depends on [4Fe-4S] cluster as a cofactor.

It carries out the reaction (2E)-4-hydroxy-3-methylbut-2-enyl diphosphate + oxidized [flavodoxin] + H2O + 2 H(+) = 2-C-methyl-D-erythritol 2,4-cyclic diphosphate + reduced [flavodoxin]. It participates in isoprenoid biosynthesis; isopentenyl diphosphate biosynthesis via DXP pathway; isopentenyl diphosphate from 1-deoxy-D-xylulose 5-phosphate: step 5/6. Converts 2C-methyl-D-erythritol 2,4-cyclodiphosphate (ME-2,4cPP) into 1-hydroxy-2-methyl-2-(E)-butenyl 4-diphosphate. In Wolinella succinogenes (strain ATCC 29543 / DSM 1740 / CCUG 13145 / JCM 31913 / LMG 7466 / NCTC 11488 / FDC 602W) (Vibrio succinogenes), this protein is 4-hydroxy-3-methylbut-2-en-1-yl diphosphate synthase (flavodoxin).